A 161-amino-acid chain; its full sequence is UPF0225 protein GSU1048 (161 aa).

Belongs to the UPF0225 family.

This Geobacter sulfurreducens (strain ATCC 51573 / DSM 12127 / PCA) protein is UPF0225 protein GSU1048.